We begin with the raw amino-acid sequence, 729 residues long: Polyribonucleotide nucleotidyltransferase (729 aa).

Positions tyrosine 399–proline 419 are disordered. The Mg(2+) site is built by aspartate 509 and aspartate 515. The KH domain occupies proline 575–isoleucine 634. Residues glycine 646–glycine 718 form the S1 motif domain.

It belongs to the polyribonucleotide nucleotidyltransferase family. Requires Mg(2+) as cofactor.

It is found in the cytoplasm. It carries out the reaction RNA(n+1) + phosphate = RNA(n) + a ribonucleoside 5'-diphosphate. Functionally, involved in mRNA degradation. Catalyzes the phosphorolysis of single-stranded polyribonucleotides processively in the 3'- to 5'-direction. The polypeptide is Polyribonucleotide nucleotidyltransferase (Parafrankia sp. (strain EAN1pec)).